Consider the following 1361-residue polypeptide: uncharacterized protein (1361 aa).

It belongs to the IIV-6 261R/396L/443R family.

This is an uncharacterized protein from Invertebrate iridescent virus 6 (IIV-6).